The primary structure comprises 392 residues: O-phospho-L-seryl-tRNA:Cys-tRNA synthase 2 (392 aa).

Residues 85–86 (AR), asparagine 190, and 213–215 (SGH) each bind pyridoxal 5'-phosphate. Position 216 is an N6-(pyridoxal phosphate)lysine (lysine 216).

This sequence belongs to the SepCysS family. As to quaternary structure, homodimer. Interacts with SepRS. It depends on pyridoxal 5'-phosphate as a cofactor.

It catalyses the reaction O-phospho-L-seryl-tRNA(Cys) + hydrogen sulfide + H(+) = L-cysteinyl-tRNA(Cys) + phosphate. Its function is as follows. Converts O-phospho-L-seryl-tRNA(Cys) (Sep-tRNA(Cys)) to L-cysteinyl-tRNA(Cys) (Cys-tRNA(Cys)). The protein is O-phospho-L-seryl-tRNA:Cys-tRNA synthase 2 of Methanocorpusculum labreanum (strain ATCC 43576 / DSM 4855 / Z).